Consider the following 122-residue polypeptide: Small ribosomal subunit protein uS12 (122 aa).

Position 89 is a 3-methylthioaspartic acid (aspartate 89).

This sequence belongs to the universal ribosomal protein uS12 family. Part of the 30S ribosomal subunit. Contacts proteins S8 and S17. May interact with IF1 in the 30S initiation complex.

With S4 and S5 plays an important role in translational accuracy. Its function is as follows. Interacts with and stabilizes bases of the 16S rRNA that are involved in tRNA selection in the A site and with the mRNA backbone. Located at the interface of the 30S and 50S subunits, it traverses the body of the 30S subunit contacting proteins on the other side and probably holding the rRNA structure together. The combined cluster of proteins S8, S12 and S17 appears to hold together the shoulder and platform of the 30S subunit. This chain is Small ribosomal subunit protein uS12, found in Corynebacterium glutamicum (strain R).